Here is a 391-residue protein sequence, read N- to C-terminus: Multidrug resistance protein MdtL (391 aa).

12 consecutive transmembrane segments (helical) span residues 4 to 24 (FLIC…MYLV), 42 to 62 (IAFS…GKVA), 69 to 89 (PVAI…SLAE), 93 to 113 (LFLA…VVAF), 131 to 151 (LLNG…HLIM), 158 to 178 (SLFW…LFIL), 203 to 222 (FFLS…LTFV), 245 to 265 (ALTA…LGIF), 269 to 289 (TLMI…AVSP), 293 to 313 (VSLF…GVAM), 331 to 351 (LGIA…VVGI), and 356 to 376 (MLIG…MFVA).

This sequence belongs to the major facilitator superfamily. DHA1 family. MdtL (TC 2.A.1.2.22) subfamily.

Its subcellular location is the cell inner membrane. Confers resistance to chloramphenicol. In Escherichia coli O139:H28 (strain E24377A / ETEC), this protein is Multidrug resistance protein MdtL.